Consider the following 433-residue polypeptide: Protein translocase subunit SecY (433 aa).

10 helical membrane-spanning segments follow: residues 17–37 (IIFT…PIPG), 71–91 (IFAL…LMSV), 117–137 (LTVL…ESMV), 141–161 (GPVV…TLVV), 184–204 (LIIF…MFEL), 212–232 (PLIA…IIFF), 268–288 (GVIP…LANF), 310–330 (YILL…AIVF), 366–386 (LTVI…LLMN), and 388–408 (YVIS…VVLD).

It belongs to the SecY/SEC61-alpha family. As to quaternary structure, component of the Sec protein translocase complex. Heterotrimer consisting of SecY, SecE and SecG subunits. The heterotrimers can form oligomers, although 1 heterotrimer is thought to be able to translocate proteins. Interacts with the ribosome. Interacts with SecDF, and other proteins may be involved. Interacts with SecA.

Its subcellular location is the cell inner membrane. Functionally, the central subunit of the protein translocation channel SecYEG. Consists of two halves formed by TMs 1-5 and 6-10. These two domains form a lateral gate at the front which open onto the bilayer between TMs 2 and 7, and are clamped together by SecE at the back. The channel is closed by both a pore ring composed of hydrophobic SecY resides and a short helix (helix 2A) on the extracellular side of the membrane which forms a plug. The plug probably moves laterally to allow the channel to open. The ring and the pore may move independently. The sequence is that of Protein translocase subunit SecY from Rickettsia typhi (strain ATCC VR-144 / Wilmington).